Reading from the N-terminus, the 383-residue chain is D-alanine--D-alanine ligase (383 aa).

The region spanning 164–373 is the ATP-grasp domain; the sequence is KLAFQAAGLE…YSALIDELIT (210 aa). 196 to 251 lines the ATP pocket; that stretch reads VAELGFPVFVKPARAGSSFGITRVDEPSQLDAAIATAREHDLKLVVEAGIDGREIE. Positions 327, 340, and 342 each coordinate Mg(2+).

This sequence belongs to the D-alanine--D-alanine ligase family. Requires Mg(2+) as cofactor. The cofactor is Mn(2+).

The protein localises to the cytoplasm. The catalysed reaction is 2 D-alanine + ATP = D-alanyl-D-alanine + ADP + phosphate + H(+). The protein operates within cell wall biogenesis; peptidoglycan biosynthesis. Cell wall formation. In Kocuria rhizophila (strain ATCC 9341 / DSM 348 / NBRC 103217 / DC2201), this protein is D-alanine--D-alanine ligase.